Consider the following 183-residue polypeptide: Pyruvoyl-dependent arginine decarboxylase (183 aa).

S44 is subject to Pyruvic acid (Ser).

This sequence belongs to the PdaD family. Pyruvate serves as cofactor.

The catalysed reaction is L-arginine + H(+) = agmatine + CO2. This Nitrosopumilus maritimus (strain SCM1) protein is Pyruvoyl-dependent arginine decarboxylase.